A 414-amino-acid polypeptide reads, in one-letter code: uncharacterized protein (414 aa).

Positions 204-230 (LVGTPAPGPNGSNSDGDSERASQDVRD) are disordered. Basic and acidic residues predominate over residues 220–230 (DSERASQDVRD).

The protein belongs to the CdaR family.

This is an uncharacterized protein from Mycobacterium tuberculosis (strain CDC 1551 / Oshkosh).